The following is a 325-amino-acid chain: Probable cell division protein WhiA (325 aa).

Residues 273–306 (SLEELGALADPPLTKDAVAGRIRRLLALADKRAN) constitute a DNA-binding region (H-T-H motif).

It belongs to the WhiA family.

Its function is as follows. Involved in cell division and chromosome segregation. The chain is Probable cell division protein WhiA from Frankia alni (strain DSM 45986 / CECT 9034 / ACN14a).